Here is a 569-residue protein sequence, read N- to C-terminus: MELFYELLLTAAASLLVAFLLARLLASAATASDPRRRAPDHAAVIAEEEAVVVEEERIIEVDEVEVKSARARECVVSEGWVEVGRASSAEGKLECLPEEEEAPAKAARELVLDAVLEEREEEGQVGEERCDLAAAVAEVVGVKPHELGVEAAPGEVSDVTLEEGKVQDVGVEQHDLVAEAAPREALDTGLEKQGVPIIEAVEIKRQDDLGAEVAPSDVPEVEFEQQGVRIIEAIDVNQHHRVALAAPAEVVDAGLEERVQAIEAGSSGLTSETVPEEVLDELSEKQEEQVIEEKEHQLAAATAPVAIPGVALAETEELKEEQSSEKAVNVHEEVQSKDEAKCKLHLVDQQEGSASKVELVGRNTDNVEISHGSSSGDKMIAELTEEELTLQGVPADETQTDMEFGEWEGIERTEIEKRFGVAAAFASSDAGMAALSKLDSDVQLQLQGLLKVAIDGPCYDSTQPLTLRPSSRAKWAAWQKLGNMYPETAMERYMNLLSEAIPGWMGDNISGTKEHEAGDDAVGSVLTMTSNTINQHDSQGNEDNTGMYEGHLTSSPNPEKGQSSDIPAE.

The N-terminal stretch at 1-31 (MELFYELLLTAAASLLVAFLLARLLASAATA) is a signal peptide. Residues 415–506 (IEKRFGVAAA…LSEAIPGWMG (92 aa)) enclose the ACB domain. 2 residues coordinate an acyl-CoA: Lys-474 and Tyr-493. N-linked (GlcNAc...) asparagine glycosylation is present at Asn-508. Composition is skewed to polar residues over residues 533-544 (INQHDSQGNEDN) and 552-569 (LTSS…IPAE). The segment at 533-569 (INQHDSQGNEDNTGMYEGHLTSSPNPEKGQSSDIPAE) is disordered.

It belongs to the ACBP family. As to expression, highly expressed in seeds and leaves. Expressed at low levels in roots.

Its subcellular location is the endoplasmic reticulum. In terms of biological role, binds medium- and long-chain acyl-CoA esters with high affinity. Can interact in vitro with palmitoyl-CoA and linolenoyl-CoA. Binds phosphatidic acid (PA) and phosphatidylcholine (PC) in vitro. May play a role in the biosynthesis of phospholipids. This Oryza sativa subsp. japonica (Rice) protein is Acyl-CoA-binding domain-containing protein 5.